A 264-amino-acid polypeptide reads, in one-letter code: Mitochondrial distribution and morphology protein 12 (264 aa).

In terms of domain architecture, SMP-LTD spans 1-232 (MSFDINWNKI…WPSWINLDFN (232 aa)). The tract at residues 240–264 (ESSSSAEESLPHRDDAQDFSADARA) is disordered. Over residues 248 to 264 (SLPHRDDAQDFSADARA) the composition is skewed to basic and acidic residues.

It belongs to the MDM12 family. Component of the ER-mitochondria encounter structure (ERMES) or MDM complex, composed of MMM1, MDM10, MDM12 and MDM34. An MMM1 homodimer associates with one molecule of MDM12 on each side in a pairwise head-to-tail manner, and the SMP-LTD domains of MMM1 and MDM12 generate a continuous hydrophobic tunnel for phospholipid trafficking.

It is found in the mitochondrion outer membrane. It localises to the endoplasmic reticulum membrane. Its function is as follows. Component of the ERMES/MDM complex, which serves as a molecular tether to connect the endoplasmic reticulum (ER) and mitochondria. Components of this complex are involved in the control of mitochondrial shape and protein biogenesis, and function in nonvesicular lipid trafficking between the ER and mitochondria. MDM12 is required for the interaction of the ER-resident membrane protein MMM1 and the outer mitochondrial membrane-resident beta-barrel protein MDM10. The MDM12-MMM1 subcomplex functions in the major beta-barrel assembly pathway that is responsible for biogenesis of all mitochondrial outer membrane beta-barrel proteins, and acts in a late step after the SAM complex. The MDM10-MDM12-MMM1 subcomplex further acts in the TOM40-specific pathway after the action of the MDM12-MMM1 complex. Essential for establishing and maintaining the structure of mitochondria and maintenance of mtDNA nucleoids. This Eremothecium gossypii (strain ATCC 10895 / CBS 109.51 / FGSC 9923 / NRRL Y-1056) (Yeast) protein is Mitochondrial distribution and morphology protein 12.